The following is a 193-amino-acid chain: Xanthine phosphoribosyltransferase (193 aa).

The xanthine site is built by L20 and T27. 128–132 provides a ligand contact to 5-phospho-alpha-D-ribose 1-diphosphate; it reads ANGQA. K156 is a xanthine binding site.

It belongs to the purine/pyrimidine phosphoribosyltransferase family. Xpt subfamily. Homodimer.

Its subcellular location is the cytoplasm. It carries out the reaction XMP + diphosphate = xanthine + 5-phospho-alpha-D-ribose 1-diphosphate. Its pathway is purine metabolism; XMP biosynthesis via salvage pathway; XMP from xanthine: step 1/1. Functionally, converts the preformed base xanthine, a product of nucleic acid breakdown, to xanthosine 5'-monophosphate (XMP), so it can be reused for RNA or DNA synthesis. The sequence is that of Xanthine phosphoribosyltransferase from Streptococcus pneumoniae serotype 19F (strain G54).